Reading from the N-terminus, the 880-residue chain is Translation initiation factor IF-2 (880 aa).

The interval Lys259–Thr281 is disordered. Residues Ser379–Lys548 enclose the tr-type G domain. Residues Gly388–Thr395 are G1. Gly388–Thr395 contacts GTP. The tract at residues Gly413–His417 is G2. Positions Asp434–Gly437 are G3. GTP-binding positions include Asp434 to His438 and Asn488 to Asp491. The interval Asn488–Asp491 is G4. A G5 region spans residues Ser524–Lys526.

This sequence belongs to the TRAFAC class translation factor GTPase superfamily. Classic translation factor GTPase family. IF-2 subfamily.

The protein localises to the cytoplasm. Its function is as follows. One of the essential components for the initiation of protein synthesis. Protects formylmethionyl-tRNA from spontaneous hydrolysis and promotes its binding to the 30S ribosomal subunits. Also involved in the hydrolysis of GTP during the formation of the 70S ribosomal complex. The sequence is that of Translation initiation factor IF-2 from Baumannia cicadellinicola subsp. Homalodisca coagulata.